The following is a 303-amino-acid chain: Protoheme IX farnesyltransferase (303 aa).

9 consecutive transmembrane segments (helical) span residues 30 to 50, 54 to 74, 101 to 121, 123 to 143, 150 to 170, 178 to 198, 219 to 241, 245 to 262, and 279 to 299; these read VMSL…STVS, AMIA…LNMW, ALIF…YFAN, ISAV…TIWL, NIVI…TIAT, ITFF…LSLY, STKI…PYAI, GLVF…YNIL, and AKTI…IFLI.

This sequence belongs to the UbiA prenyltransferase family. Protoheme IX farnesyltransferase subfamily.

It is found in the cell inner membrane. It carries out the reaction heme b + (2E,6E)-farnesyl diphosphate + H2O = Fe(II)-heme o + diphosphate. Its pathway is porphyrin-containing compound metabolism; heme O biosynthesis; heme O from protoheme: step 1/1. Its function is as follows. Converts heme B (protoheme IX) to heme O by substitution of the vinyl group on carbon 2 of heme B porphyrin ring with a hydroxyethyl farnesyl side group. The chain is Protoheme IX farnesyltransferase from Pelagibacter ubique (strain HTCC1062).